The chain runs to 332 residues: UDP-N-acetylenolpyruvoylglucosamine reductase (332 aa).

The FAD-binding PCMH-type domain occupies 45-243 (RAGGHAAYFY…LGTRIKTQPL (199 aa)). Arg-194 is a catalytic residue. Catalysis depends on Ser-250, which acts as the Proton donor. Residue Glu-320 is part of the active site.

This sequence belongs to the MurB family. The cofactor is FAD.

It localises to the cytoplasm. It carries out the reaction UDP-N-acetyl-alpha-D-muramate + NADP(+) = UDP-N-acetyl-3-O-(1-carboxyvinyl)-alpha-D-glucosamine + NADPH + H(+). Its pathway is cell wall biogenesis; peptidoglycan biosynthesis. In terms of biological role, cell wall formation. The polypeptide is UDP-N-acetylenolpyruvoylglucosamine reductase (Nitrosomonas eutropha (strain DSM 101675 / C91 / Nm57)).